Reading from the N-terminus, the 265-residue chain is Putative methyltransferase 235L (265 aa).

Positions 1 to 17 are cleaved as a signal peptide; it reads MDICICYFFTILTTISC.

The protein belongs to the methyltransferase superfamily.

The chain is Putative methyltransferase 235L from Acheta domesticus (House cricket).